Here is a 239-residue protein sequence, read N- to C-terminus: tRNA (guanine-N(7)-)-methyltransferase (239 aa).

Positions 68, 93, 120, and 143 each coordinate S-adenosyl-L-methionine. The active site involves aspartate 143. Residues lysine 147, aspartate 180, and 217-220 (TKFE) each bind substrate.

Belongs to the class I-like SAM-binding methyltransferase superfamily. TrmB family.

It carries out the reaction guanosine(46) in tRNA + S-adenosyl-L-methionine = N(7)-methylguanosine(46) in tRNA + S-adenosyl-L-homocysteine. The protein operates within tRNA modification; N(7)-methylguanine-tRNA biosynthesis. Its function is as follows. Catalyzes the formation of N(7)-methylguanine at position 46 (m7G46) in tRNA. This chain is tRNA (guanine-N(7)-)-methyltransferase, found in Vibrio parahaemolyticus serotype O3:K6 (strain RIMD 2210633).